Here is a 472-residue protein sequence, read N- to C-terminus: RNA pseudouridine synthase 6, chloroplastic (472 aa).

Residues methionine 1–serine 66 constitute a chloroplast transit peptide. One can recognise an S4 RNA-binding domain in the interval valine 101–lysine 208. Aspartate 261 is an active-site residue.

The protein belongs to the pseudouridine synthase RluA family.

The protein localises to the plastid. Its subcellular location is the chloroplast. It carries out the reaction a uridine in RNA = a pseudouridine in RNA. The polypeptide is RNA pseudouridine synthase 6, chloroplastic (Arabidopsis thaliana (Mouse-ear cress)).